Reading from the N-terminus, the 338-residue chain is MKVYYDKDADLSLIKQRKVAIVGYGSQGHAHANNLKDSGVDVTVALRPGSASAKKAENAGLTVKSVPEAVAGADLVMILTPDEFQSRLYRDEIEPNIKQGATLAFAHGFSIHYNQVVPRADLDVIMIAPKAPGHTVRSEFVKGGGIPDLIAIYQDASGKAKETALSYASAIGGGRTGIIETTFKDETETDLFGEQAVLCGGAVELVKAGFDTLVEAGYAPEMAYFECLHELKLIVDLMYEGGIANMNYSISNNAEYGEYVTGVKVINEQSRAAMKECLANIQNGAYAKRFILEGQANYPEMTAWRRNNAAHQIEVVGAKLRSMMPWIAANKLVDHSKN.

A KARI N-terminal Rossmann domain is found at 1 to 181 (MKVYYDKDAD…GGGRTGIIET (181 aa)). Residues 24–27 (YGSQ), Arg47, Ser50, Ser52, and 82–85 (DEFQ) contribute to the NADP(+) site. The active site involves His107. An NADP(+)-binding site is contributed by Gly133. Residues 182 to 327 (TFKDETETDL…AKLRSMMPWI (146 aa)) enclose the KARI C-terminal knotted domain. Mg(2+)-binding residues include Asp190, Glu194, Glu226, and Glu230. Ser251 contacts substrate.

It belongs to the ketol-acid reductoisomerase family. Mg(2+) is required as a cofactor.

The catalysed reaction is (2R)-2,3-dihydroxy-3-methylbutanoate + NADP(+) = (2S)-2-acetolactate + NADPH + H(+). It catalyses the reaction (2R,3R)-2,3-dihydroxy-3-methylpentanoate + NADP(+) = (S)-2-ethyl-2-hydroxy-3-oxobutanoate + NADPH + H(+). It participates in amino-acid biosynthesis; L-isoleucine biosynthesis; L-isoleucine from 2-oxobutanoate: step 2/4. It functions in the pathway amino-acid biosynthesis; L-valine biosynthesis; L-valine from pyruvate: step 2/4. Involved in the biosynthesis of branched-chain amino acids (BCAA). Catalyzes an alkyl-migration followed by a ketol-acid reduction of (S)-2-acetolactate (S2AL) to yield (R)-2,3-dihydroxy-isovalerate. In the isomerase reaction, S2AL is rearranged via a Mg-dependent methyl migration to produce 3-hydroxy-3-methyl-2-ketobutyrate (HMKB). In the reductase reaction, this 2-ketoacid undergoes a metal-dependent reduction by NADPH to yield (R)-2,3-dihydroxy-isovalerate. This is Ketol-acid reductoisomerase (NADP(+)) from Thiobacillus denitrificans (strain ATCC 25259 / T1).